Consider the following 450-residue polypeptide: Divalent metal cation transporter MntH (450 aa).

The next 11 helical transmembrane spans lie at 34–54 (LSFL…GNWI), 61–81 (AQYG…AMLL), 108–128 (IAII…IAEV), 141–161 (IPLI…LFIM), 170–190 (AIVG…VYIS), 212–232 (GILY…NLYL), 263–283 (IQLS…ASLF), 305–325 (PVLG…ALLA), 361–381 (SLAV…AAKI), 383–403 (QLLV…LIPL), and 422–442 (VNII…YLIV).

This sequence belongs to the NRAMP family.

It is found in the cell membrane. Functionally, h(+)-stimulated, divalent metal cation uptake system. This Staphylococcus aureus (strain bovine RF122 / ET3-1) protein is Divalent metal cation transporter MntH.